The sequence spans 181 residues: Segregation and condensation protein B (181 aa).

The protein belongs to the ScpB family. In terms of assembly, homodimer. Homodimerization may be required to stabilize the binding of ScpA to the Smc head domains. Component of a cohesin-like complex composed of ScpA, ScpB and the Smc homodimer, in which ScpA and ScpB bind to the head domain of Smc. The presence of the three proteins is required for the association of the complex with DNA.

The protein localises to the cytoplasm. Its function is as follows. Participates in chromosomal partition during cell division. May act via the formation of a condensin-like complex containing Smc and ScpA that pull DNA away from mid-cell into both cell halves. In Desulforamulus reducens (strain ATCC BAA-1160 / DSM 100696 / MI-1) (Desulfotomaculum reducens), this protein is Segregation and condensation protein B.